The chain runs to 219 residues: ATP-dependent dethiobiotin synthetase BioD (219 aa).

14 to 19 (DVGKTY) is a binding site for ATP. Residue threonine 18 coordinates Mg(2+). Lysine 37 is an active-site residue. Serine 41 contributes to the substrate binding site. Residues aspartate 54, 114-117 (EGAG), and 175-176 (NN) contribute to the ATP site. Mg(2+)-binding residues include aspartate 54 and glutamate 114.

It belongs to the dethiobiotin synthetase family. In terms of assembly, homodimer. Mg(2+) serves as cofactor.

It localises to the cytoplasm. It carries out the reaction (7R,8S)-7,8-diammoniononanoate + CO2 + ATP = (4R,5S)-dethiobiotin + ADP + phosphate + 3 H(+). It functions in the pathway cofactor biosynthesis; biotin biosynthesis; biotin from 7,8-diaminononanoate: step 1/2. Catalyzes a mechanistically unusual reaction, the ATP-dependent insertion of CO2 between the N7 and N8 nitrogen atoms of 7,8-diaminopelargonic acid (DAPA, also called 7,8-diammoniononanoate) to form a ureido ring. In Fusobacterium nucleatum subsp. nucleatum (strain ATCC 25586 / DSM 15643 / BCRC 10681 / CIP 101130 / JCM 8532 / KCTC 2640 / LMG 13131 / VPI 4355), this protein is ATP-dependent dethiobiotin synthetase BioD.